The chain runs to 495 residues: Ribitol 5-phosphate transferase FKRP (495 aa).

At 1–6 (MRLTRC) the chain is on the cytoplasmic side. The chain crosses the membrane as a helical span at residues 7-29 (QAALAAAITLNLLVLFYVSWLQH). Residues 30 to 495 (QPRNSRARGP…PALLSLTGSG (466 aa)) lie on the Lumenal side of the membrane. Residues C168 and C191 are joined by a disulfide bond. N-linked (GlcNAc...) asparagine glycosylation is found at N172 and N209. Residues C289, C296, C317, and C318 each contribute to the Zn(2+) site. The zinc finger loop stretch occupies residues 289–318 (CNKETTRCFGTVVGDTPAYLYEERWTPPCC). Residues G345, R352, 359–364 (WDYDVD), 437–438 (QD), and 480–482 (NPQ) each bind CDP-L-ribitol. Residues D360, D362, and D364 each contribute to the Mg(2+) site.

The protein belongs to the LicD transferase family. Homodimer; disulfide-linked. Tetramer. Forms a complex composed of FKRP, FKTN/fukutin, and RXYLT1/TMEM5. Also exists as large multimeric protein complexes. May interact with the dystrophin-glycoprotein complex (DGC). Mg(2+) serves as cofactor. In terms of processing, N-glycosylated. As to expression, expressed in the retina (at protein level). Expressed predominantly in skeletal muscle, placenta, and heart and relatively weakly in brain, lung, liver, kidney, and pancreas.

Its subcellular location is the golgi apparatus membrane. The protein resides in the secreted. It localises to the cell membrane. It is found in the sarcolemma. The protein localises to the rough endoplasmic reticulum. Its subcellular location is the cytoplasm. It carries out the reaction 3-O-[Rib-ol-P-3-beta-D-GalNAc-(1-&gt;3)-beta-D-GlcNAc-(1-&gt;4)-(O-6-P-alpha-D-Man)]-Thr-[protein] + CDP-L-ribitol = 3-O-[Rib-ol-P-Rib-ol-P-3-beta-D-GalNAc-(1-&gt;3)-beta-D-GlcNAc-(1-&gt;4)-(O-6-P-alpha-D-Man)]-Thr-[protein] + CMP + H(+). Its pathway is protein modification; protein glycosylation. In terms of biological role, catalyzes the transfer of a ribitol 5-phosphate from CDP-L-ribitol to the ribitol 5-phosphate previously attached by FKTN/fukutin to the phosphorylated O-mannosyl trisaccharide (N-acetylgalactosamine-beta-3-N-acetylglucosamine-beta-4-(phosphate-6-)mannose), a carbohydrate structure present in alpha-dystroglycan (DAG1). This constitutes the second step in the formation of the ribose 5-phosphate tandem repeat which links the phosphorylated O-mannosyl trisaccharide to the ligand binding moiety composed of repeats of 3-xylosyl-alpha-1,3-glucuronic acid-beta-1. This chain is Ribitol 5-phosphate transferase FKRP, found in Homo sapiens (Human).